Reading from the N-terminus, the 294-residue chain is Beta-lactamase (294 aa).

The first 30 residues, methionine 1–alanine 30, serve as a signal peptide directing secretion. Serine 75 functions as the Acyl-ester intermediate in the catalytic mechanism. A substrate-binding site is contributed by lysine 239 to glycine 241.

Belongs to the class-A beta-lactamase family.

It catalyses the reaction a beta-lactam + H2O = a substituted beta-amino acid. The protein is Beta-lactamase (blaA) of Yersinia enterocolitica.